We begin with the raw amino-acid sequence, 520 residues long: DDB1- and CUL4-associated factor 17 (520 aa).

A run of 2 helical transmembrane segments spans residues 186-206 (VLLYLAVFRVLPFSLVGILEI) and 222-242 (GILIVMYSSGLVRLYSFQTIA).

Interacts with DDB1, CUL4A and CUL4B. Ubiquitously expressed.

It localises to the membrane. The protein resides in the nucleus. Its subcellular location is the nucleolus. The protein operates within protein modification; protein ubiquitination. In terms of biological role, may function as a substrate receptor for CUL4-DDB1 E3 ubiquitin-protein ligase complex. In Homo sapiens (Human), this protein is DDB1- and CUL4-associated factor 17 (DCAF17).